Reading from the N-terminus, the 109-residue chain is T cell receptor alpha variable 25 (109 aa).

Residues 1-19 (MLLITSMLVLWMQLSQVNG) form the signal peptide. Residues 20 to 109 (QQVMQIPQYQ…TDVGTYFCAG (90 aa)) enclose the Ig-like domain. The cysteines at positions 41 and 107 are disulfide-linked. N-linked (GlcNAc...) asparagine glycans are attached at residues Asn42 and Asn89.

In terms of assembly, alpha-beta TR is a heterodimer composed of an alpha and beta chain; disulfide-linked. The alpha-beta TR is associated with the transmembrane signaling CD3 coreceptor proteins to form the TR-CD3 (TcR or TCR). The assembly of alpha-beta TR heterodimers with CD3 occurs in the endoplasmic reticulum where a single alpha-beta TR heterodimer associates with one CD3D-CD3E heterodimer, one CD3G-CD3E heterodimer and one CD247 homodimer forming a stable octameric structure. CD3D-CD3E and CD3G-CD3E heterodimers preferentially associate with TR alpha and TR beta chains, respectively. The association of the CD247 homodimer is the last step of TcR assembly in the endoplasmic reticulum and is required for transport to the cell surface.

The protein localises to the cell membrane. Functionally, v region of the variable domain of T cell receptor (TR) alpha chain that participates in the antigen recognition. Alpha-beta T cell receptors are antigen specific receptors which are essential to the immune response and are present on the cell surface of T lymphocytes. Recognize peptide-major histocompatibility (MH) (pMH) complexes that are displayed by antigen presenting cells (APC), a prerequisite for efficient T cell adaptive immunity against pathogens. Binding of alpha-beta TR to pMH complex initiates TR-CD3 clustering on the cell surface and intracellular activation of LCK that phosphorylates the ITAM motifs of CD3G, CD3D, CD3E and CD247 enabling the recruitment of ZAP70. In turn ZAP70 phosphorylates LAT, which recruits numerous signaling molecules to form the LAT signalosome. The LAT signalosome propagates signal branching to three major signaling pathways, the calcium, the mitogen-activated protein kinase (MAPK) kinase and the nuclear factor NF-kappa-B (NF-kB) pathways, leading to the mobilization of transcription factors that are critical for gene expression and essential for T cell growth and differentiation. The T cell repertoire is generated in the thymus, by V-(D)-J rearrangement. This repertoire is then shaped by intrathymic selection events to generate a peripheral T cell pool of self-MH restricted, non-autoaggressive T cells. Post-thymic interaction of alpha-beta TR with the pMH complexes shapes TR structural and functional avidity. The sequence is that of T cell receptor alpha variable 25 from Homo sapiens (Human).